The chain runs to 310 residues: Vomeronasal type-1 receptor 44 (310 aa).

Over 1 to 20 (MNKANLLHIDTNIKITLLAE) the chain is Extracellular. A helical transmembrane segment spans residues 21–41 (VSVGISANSILFIAYLCMLLG). Over 42–50 (ENRHKPIDL) the chain is Cytoplasmic. Residues 51-71 (YIAFLSLTQLMLLITMGLIAV) traverse the membrane as a helical segment. Residues 72–93 (DMFMPWGRWDSTTCQSLIYLHR) lie on the Extracellular side of the membrane. A disulfide bond links C85 and C172. The helical transmembrane segment at 94 to 114 (FLRGLTLCATCLLNVLWTITL) threads the bilayer. The Cytoplasmic segment spans residues 115-131 (SSRNSCLAKFKHKYPHH). The helical transmembrane segment at 132 to 152 (ISGAFLFLCVLYMSFSSHFLV) threads the bilayer. Over 153–190 (SMTVTPNLTSENFMYVTQSCSLLPMSYSRTSMFSTPVA) the chain is Extracellular. A glycan (N-linked (GlcNAc...) asparagine) is linked at N159. Residues 191–211 (IRETFLISLMALSSGYMVALL) traverse the membrane as a helical segment. Residues 212-238 (WRHKKQAQHLRSTSLSSKASPEQRATR) lie on the Cytoplasmic side of the membrane. Residues 239–259 (TILLLMSFFVVFYILDTVIFH) traverse the membrane as a helical segment. Topologically, residues 260–268 (SRMKFKDGS) are extracellular. A helical transmembrane segment spans residues 269–289 (ILYCFQIIVSHSYVTVSPFVF). Topologically, residues 290–310 (ICTEKHIIKFLRSMCGRIANI) are cytoplasmic.

This sequence belongs to the G-protein coupled receptor 1 family.

Its subcellular location is the cell membrane. In terms of biological role, putative pheromone receptor implicated in the regulation of social and reproductive behavior. The sequence is that of Vomeronasal type-1 receptor 44 (Vmn1r44) from Mus musculus (Mouse).